Reading from the N-terminus, the 299-residue chain is MSLPHLRRLEAEAIHVIREVVATFSNPVVLYSIGKDSSVLLHLAMKAFYPAKPPFPFLHVDTKWKFREMIEFRDRMARELGFDLLVHVNQDGVEQGIGPFTHGSNVHTHVMKTMGLRQALEKYGFDAALAGARRDEEKSRAKERIFSIRSAQHGWDPQRQRPEMWKTYNTRVGQGETMRVFPLSNWTEFDIWQYILREEIPIVPLYFAARRPVVKREGMLIMVDDDRMPIQPEEEVTEQLVRFRTLGCYPLTGAVESDAVTVPEILREMLTVRTSERQSRLIDTDEVGAMEKKKREGYF.

Belongs to the PAPS reductase family. CysD subfamily. In terms of assembly, sulfate-activating enzymes, NodP and NodQ, may be physically associated.

The enzyme catalyses sulfate + ATP + H(+) = adenosine 5'-phosphosulfate + diphosphate. Proposed to provide activated sulfate for transfer to nod factor. The chain is Sulfate adenylyltransferase subunit 2 (nodP) from Rhizobium meliloti (strain 1021) (Ensifer meliloti).